The sequence spans 187 residues: Pterin-4-alpha-carbinolamine dehydratase 2, mitochondrial (187 aa).

Residues 1–33 constitute a mitochondrion transit peptide; it reads MSRLLLPKLFSISRTQVPAASLFNNLYRRHKRF.

It belongs to the pterin-4-alpha-carbinolamine dehydratase family.

It is found in the mitochondrion. It carries out the reaction (4aS,6R)-4a-hydroxy-L-erythro-5,6,7,8-tetrahydrobiopterin = (6R)-L-erythro-6,7-dihydrobiopterin + H2O. In terms of biological role, involved in tetrahydrobiopterin biosynthesis. Possesses pterin-4-alpha-carbinolamine dehydratase activity when expressed in a bacterial heterolgous system. In Arabidopsis thaliana (Mouse-ear cress), this protein is Pterin-4-alpha-carbinolamine dehydratase 2, mitochondrial.